Consider the following 170-residue polypeptide: Shikimate kinase (170 aa).

ATP is bound at residue 11–16 (LSGKST). Ser-15 is a Mg(2+) binding site. Substrate is bound by residues Asp-33, Arg-57, and Gly-79. Position 119 (Arg-119) interacts with ATP. Arg-137 is a substrate binding site.

This sequence belongs to the shikimate kinase family. As to quaternary structure, monomer. It depends on Mg(2+) as a cofactor.

The protein resides in the cytoplasm. The enzyme catalyses shikimate + ATP = 3-phosphoshikimate + ADP + H(+). Its pathway is metabolic intermediate biosynthesis; chorismate biosynthesis; chorismate from D-erythrose 4-phosphate and phosphoenolpyruvate: step 5/7. Its function is as follows. Catalyzes the specific phosphorylation of the 3-hydroxyl group of shikimic acid using ATP as a cosubstrate. This Clostridium botulinum (strain ATCC 19397 / Type A) protein is Shikimate kinase.